The chain runs to 229 residues: Large ribosomal subunit protein uL1 (229 aa).

The protein belongs to the universal ribosomal protein uL1 family. Part of the 50S ribosomal subunit.

Functionally, binds directly to 23S rRNA. The L1 stalk is quite mobile in the ribosome, and is involved in E site tRNA release. Its function is as follows. Protein L1 is also a translational repressor protein, it controls the translation of the L11 operon by binding to its mRNA. The sequence is that of Large ribosomal subunit protein uL1 from Chlorobium phaeobacteroides (strain DSM 266 / SMG 266 / 2430).